We begin with the raw amino-acid sequence, 245 residues long: 4-hydroxy-tetrahydrodipicolinate reductase (245 aa).

NAD(+) is bound by residues 7-12 (GAKGKV), 75-77 (GTT), and 102-105 (APNF). His-132 functions as the Proton donor/acceptor in the catalytic mechanism. His-133 contributes to the (S)-2,3,4,5-tetrahydrodipicolinate binding site. The active-site Proton donor is the Lys-136. 142 to 143 (GT) contributes to the (S)-2,3,4,5-tetrahydrodipicolinate binding site.

The protein belongs to the DapB family.

The protein resides in the cytoplasm. The enzyme catalyses (S)-2,3,4,5-tetrahydrodipicolinate + NAD(+) + H2O = (2S,4S)-4-hydroxy-2,3,4,5-tetrahydrodipicolinate + NADH + H(+). The catalysed reaction is (S)-2,3,4,5-tetrahydrodipicolinate + NADP(+) + H2O = (2S,4S)-4-hydroxy-2,3,4,5-tetrahydrodipicolinate + NADPH + H(+). Its pathway is amino-acid biosynthesis; L-lysine biosynthesis via DAP pathway; (S)-tetrahydrodipicolinate from L-aspartate: step 4/4. Its function is as follows. Catalyzes the conversion of 4-hydroxy-tetrahydrodipicolinate (HTPA) to tetrahydrodipicolinate. This Mycobacterium ulcerans (strain Agy99) protein is 4-hydroxy-tetrahydrodipicolinate reductase.